The sequence spans 475 residues: ATP synthase subunit beta, chloroplastic (475 aa).

155 to 162 (GGAGVGKT) is an ATP binding site.

It belongs to the ATPase alpha/beta chains family. F-type ATPases have 2 components, CF(1) - the catalytic core - and CF(0) - the membrane proton channel. CF(1) has five subunits: alpha(3), beta(3), gamma(1), delta(1), epsilon(1). CF(0) has four main subunits: a(1), b(1), b'(1) and c(9-12).

Its subcellular location is the plastid. It localises to the chloroplast thylakoid membrane. The catalysed reaction is ATP + H2O + 4 H(+)(in) = ADP + phosphate + 5 H(+)(out). Produces ATP from ADP in the presence of a proton gradient across the membrane. The catalytic sites are hosted primarily by the beta subunits. This Porphyra purpurea (Red seaweed) protein is ATP synthase subunit beta, chloroplastic.